Consider the following 234-residue polypeptide: FAS1 domain-containing protein AFUA_8G05360 (234 aa).

A signal peptide spans 1 to 21; the sequence is MRRTLFVLFVVAFCFIGSVIA. The FAS1 domain maps to 83 to 231; it reads KPVVSDVLPK…GELWILNSVL (149 aa).

The protein localises to the vacuole. This Aspergillus fumigatus (strain ATCC MYA-4609 / CBS 101355 / FGSC A1100 / Af293) (Neosartorya fumigata) protein is FAS1 domain-containing protein AFUA_8G05360.